We begin with the raw amino-acid sequence, 444 residues long: RING finger and transmembrane domain-containing protein 2 (444 aa).

Residues M1–H181 lie on the Extracellular side of the membrane. Disordered regions lie at residues M13 to D41 and P92 to P149. Over residues Y107–H121 the composition is skewed to basic residues. Basic and acidic residues predominate over residues G131–E140. A helical membrane pass occupies residues K182–L202. Over R203–V214 the chain is Cytoplasmic. Residues L215–F235 traverse the membrane as a helical segment. The Extracellular segment spans residues S236–D255. A helical membrane pass occupies residues F256–A276. At L277–S329 the chain is on the cytoplasmic side. A helical transmembrane segment spans residues Y330 to G350. Residues R351 to Y444 lie on the Extracellular side of the membrane. The segment at C384–R422 adopts an RING-type; degenerate zinc-finger fold.

Its subcellular location is the membrane. Functionally, E3 ubiquitin-protein ligase that negatively regulates IL3-dependent cellular responses through IL3RA ubiquitination and degradation by the proteasome, having an anti-inflammatory effect. This is RING finger and transmembrane domain-containing protein 2 (RNFT2) from Pongo abelii (Sumatran orangutan).